The primary structure comprises 172 residues: Small ribosomal subunit protein uS5 (172 aa).

The 64-residue stretch at 16-79 (LKEKLVHINR…EDGKKNVIKV (64 aa)) folds into the S5 DRBM domain.

Belongs to the universal ribosomal protein uS5 family. In terms of assembly, part of the 30S ribosomal subunit. Contacts proteins S4 and S8.

Functionally, with S4 and S12 plays an important role in translational accuracy. Located at the back of the 30S subunit body where it stabilizes the conformation of the head with respect to the body. The chain is Small ribosomal subunit protein uS5 from Chlorobium phaeobacteroides (strain DSM 266 / SMG 266 / 2430).